We begin with the raw amino-acid sequence, 299 residues long: CDP-abequose synthase (299 aa).

Substrate is bound at residue threonine 117. The Proton acceptor role is filled by tyrosine 134.

This sequence belongs to the NAD(P)-dependent epimerase/dehydratase family.

It catalyses the reaction CDP-alpha-D-abequose + NADP(+) = CDP-4-dehydro-3,6-dideoxy-alpha-D-glucose + NADPH + H(+). It participates in bacterial outer membrane biogenesis; LPS O-antigen biosynthesis. The polypeptide is CDP-abequose synthase (rfbJ) (Salmonella typhimurium (strain LT2 / SGSC1412 / ATCC 700720)).